The following is a 439-amino-acid chain: 3-phosphoshikimate 1-carboxyvinyltransferase (439 aa).

Positions 27, 28, and 32 each coordinate 3-phosphoshikimate. Position 27 (lysine 27) interacts with phosphoenolpyruvate. Positions 101 and 130 each coordinate phosphoenolpyruvate. 3-phosphoshikimate is bound by residues serine 175, glutamine 177, aspartate 326, and lysine 353. A phosphoenolpyruvate-binding site is contributed by glutamine 177. The active-site Proton acceptor is the aspartate 326. Arginine 357 and arginine 399 together coordinate phosphoenolpyruvate.

Belongs to the EPSP synthase family. As to quaternary structure, monomer.

The protein localises to the cytoplasm. The catalysed reaction is 3-phosphoshikimate + phosphoenolpyruvate = 5-O-(1-carboxyvinyl)-3-phosphoshikimate + phosphate. It participates in metabolic intermediate biosynthesis; chorismate biosynthesis; chorismate from D-erythrose 4-phosphate and phosphoenolpyruvate: step 6/7. In terms of biological role, catalyzes the transfer of the enolpyruvyl moiety of phosphoenolpyruvate (PEP) to the 5-hydroxyl of shikimate-3-phosphate (S3P) to produce enolpyruvyl shikimate-3-phosphate and inorganic phosphate. The sequence is that of 3-phosphoshikimate 1-carboxyvinyltransferase from Synechococcus sp. (strain WH7803).